The chain runs to 258 residues: Trans-aconitate 2-methyltransferase (258 aa).

This sequence belongs to the methyltransferase superfamily. Tam family.

It localises to the cytoplasm. The catalysed reaction is trans-aconitate + S-adenosyl-L-methionine = (E)-3-(methoxycarbonyl)pent-2-enedioate + S-adenosyl-L-homocysteine. In terms of biological role, catalyzes the S-adenosylmethionine monomethyl esterification of trans-aconitate. The sequence is that of Trans-aconitate 2-methyltransferase from Yersinia pseudotuberculosis serotype O:1b (strain IP 31758).